Consider the following 66-residue polypeptide: Defensin-B1 (66 aa).

The first 23 residues, M1–G23, serve as a signal peptide directing secretion. Cystine bridges form between C29/C56, C36/C50, and C40/C57. Residues V61–G66 constitute a propeptide that is removed on maturation.

It belongs to the beta-defensin family. As to expression, expressed at low levels in kidney, lung, and spleen.

The protein resides in the secreted. In terms of biological role, has bactericidal activity. May act as a ligand for C-C chemokine receptor CCR6. Positively regulates the sperm motility and bactericidal activity in a CCR6-dependent manner. Binds to CCR6 and triggers Ca2+ mobilization in the sperm which is important for its motility. This chain is Defensin-B1, found in Ornithorhynchus anatinus (Duckbill platypus).